Here is a 589-residue protein sequence, read N- to C-terminus: Mitoguardin 2 (589 aa).

2 helical membrane passes run Ile11–Gly31 and Pro42–Ala62. Residues Val87–Ser134 are disordered. 2 stretches are compositionally biased toward low complexity: residues Arg106–Ser116 and Ile123–Ser134.

This sequence belongs to the mitoguardin family. In terms of assembly, homodimer and heterodimer; forms heterodimers with miga1.

The protein resides in the mitochondrion outer membrane. In terms of biological role, regulator of mitochondrial fusion: acts by forming homo- and heterodimers at the mitochondrial outer membrane and facilitating the formation of pld6/MitoPLD dimers. May act by regulating phospholipid metabolism via pld6/MitoPLD. The protein is Mitoguardin 2 of Xenopus laevis (African clawed frog).